Here is a 289-residue protein sequence, read N- to C-terminus: Ribosomal RNA small subunit methyltransferase A (289 aa).

S-adenosyl-L-methionine is bound by residues N33, V35, G60, E81, D111, and N130.

This sequence belongs to the class I-like SAM-binding methyltransferase superfamily. rRNA adenine N(6)-methyltransferase family. RsmA subfamily.

It localises to the cytoplasm. The catalysed reaction is adenosine(1518)/adenosine(1519) in 16S rRNA + 4 S-adenosyl-L-methionine = N(6)-dimethyladenosine(1518)/N(6)-dimethyladenosine(1519) in 16S rRNA + 4 S-adenosyl-L-homocysteine + 4 H(+). Its function is as follows. Specifically dimethylates two adjacent adenosines (A1518 and A1519) in the loop of a conserved hairpin near the 3'-end of 16S rRNA in the 30S particle. May play a critical role in biogenesis of 30S subunits. This chain is Ribosomal RNA small subunit methyltransferase A, found in Corynebacterium efficiens (strain DSM 44549 / YS-314 / AJ 12310 / JCM 11189 / NBRC 100395).